Reading from the N-terminus, the 57-residue chain is uncharacterized protein (57 aa).

This is an uncharacterized protein from Dictyostelium discoideum (Social amoeba).